Consider the following 358-residue polypeptide: 4-hydroxy-3-methylbut-2-en-1-yl diphosphate synthase (flavodoxin) (358 aa).

Residues cysteine 264, cysteine 267, cysteine 299, and glutamate 306 each coordinate [4Fe-4S] cluster.

It belongs to the IspG family. Requires [4Fe-4S] cluster as cofactor.

The catalysed reaction is (2E)-4-hydroxy-3-methylbut-2-enyl diphosphate + oxidized [flavodoxin] + H2O + 2 H(+) = 2-C-methyl-D-erythritol 2,4-cyclic diphosphate + reduced [flavodoxin]. The protein operates within isoprenoid biosynthesis; isopentenyl diphosphate biosynthesis via DXP pathway; isopentenyl diphosphate from 1-deoxy-D-xylulose 5-phosphate: step 5/6. Functionally, converts 2C-methyl-D-erythritol 2,4-cyclodiphosphate (ME-2,4cPP) into 1-hydroxy-2-methyl-2-(E)-butenyl 4-diphosphate. The chain is 4-hydroxy-3-methylbut-2-en-1-yl diphosphate synthase (flavodoxin) from Helicobacter acinonychis (strain Sheeba).